Reading from the N-terminus, the 322-residue chain is Cytochrome f (322 aa).

The signal sequence occupies residues 1 to 35; that stretch reads MQNRNIFSWVKEQTTRSISVSIMILIYVITWTSIS. Y38, C58, C61, and H62 together coordinate heme. The chain crosses the membrane as a helical span at residues 288–308; the sequence is VQGLFFFFASVILAQIFLVLK.

The protein belongs to the cytochrome f family. The 4 large subunits of the cytochrome b6-f complex are cytochrome b6, subunit IV (17 kDa polypeptide, petD), cytochrome f and the Rieske protein, while the 4 small subunits are PetG, PetL, PetM and PetN. The complex functions as a dimer. The cofactor is heme.

The protein resides in the plastid. It localises to the chloroplast thylakoid membrane. Functionally, component of the cytochrome b6-f complex, which mediates electron transfer between photosystem II (PSII) and photosystem I (PSI), cyclic electron flow around PSI, and state transitions. This is Cytochrome f from Nandina domestica (Heavenly bamboo).